Consider the following 238-residue polypeptide: MTEVTKNDFTEEGKIVRKIRSFVRREGRLTKGQEGAITECWSTMGIDFVEQVLDWNEVFGNNNPVVLEIGFGMGASLVEMAQKAPDVNFLGIEVHRPGVGACLAAAKEAGVTNLRVMCHDAVEVFESMIPDSSVTTLQLFFPDPWHKARHHKRRIVKAEFAEMIRPKLNAEGVFHMATDWENYAEHMIEVMNAAPGYENIATDGDYIPRPDERPLTKFEARGHRLGHGVWDIKFRRNA.

S-adenosyl-L-methionine-binding residues include Glu-68, Glu-93, Asp-120, and Asp-143. Asp-143 is a catalytic residue. Substrate is bound by residues Lys-147, Asp-179, and 216–219 (TKFE).

Belongs to the class I-like SAM-binding methyltransferase superfamily. TrmB family.

The catalysed reaction is guanosine(46) in tRNA + S-adenosyl-L-methionine = N(7)-methylguanosine(46) in tRNA + S-adenosyl-L-homocysteine. Its pathway is tRNA modification; N(7)-methylguanine-tRNA biosynthesis. Functionally, catalyzes the formation of N(7)-methylguanine at position 46 (m7G46) in tRNA. The sequence is that of tRNA (guanine-N(7)-)-methyltransferase from Aliivibrio salmonicida (strain LFI1238) (Vibrio salmonicida (strain LFI1238)).